Consider the following 328-residue polypeptide: Phosphate acyltransferase (328 aa).

This sequence belongs to the PlsX family. Homodimer. Probably interacts with PlsY.

It localises to the cytoplasm. The enzyme catalyses a fatty acyl-[ACP] + phosphate = an acyl phosphate + holo-[ACP]. The protein operates within lipid metabolism; phospholipid metabolism. In terms of biological role, catalyzes the reversible formation of acyl-phosphate (acyl-PO(4)) from acyl-[acyl-carrier-protein] (acyl-ACP). This enzyme utilizes acyl-ACP as fatty acyl donor, but not acyl-CoA. This Campylobacter jejuni (strain RM1221) protein is Phosphate acyltransferase.